A 107-amino-acid polypeptide reads, in one-letter code: Endonuclease ALBA3 (107 aa).

2 positions are modified to N6-acetyllysine: lysine 23 and lysine 32.

It belongs to the histone-like Alba family. In terms of assembly, homodimer. Interacts (acetylated and unacetylated) with Sir2A. A divalent metal cation is required as a cofactor. Post-translationally, acetylated. Exists in both acetylated and unacetylated forms but predominantly in an acetylated form. Deacetylated by Sir2A.

Its subcellular location is the nucleus. The protein localises to the chromosome. It localises to the telomere. It is found in the cytoplasm. Its activity is regulated as follows. Mild acetylation lowers protein interaction with DNA and high acetylation abolishes DNA-binding activity. DNA binding and endonuclease activity is modulated via deacetylation of Lys-23 by Sir2A. Inhibited in the presence of EDTA and EGTA. Possesses DNA-binding and endonuclease activities. Binds DNA cooperatively in sequence-independent manner at the DNA minor groove. Exhibits apurinic/apyrimidinic site-driven endonuclease activity. Binds RNA; shows high affinity for poly(A) and a lower affinity for poly(U) templates. In vitro, prevents transcription after DNA binding. Associates with the telomeric region, the subtelomeric TARE6 repeat sequence and the var gene promoters. The polypeptide is Endonuclease ALBA3 (Plasmodium falciparum (isolate 3D7)).